The sequence spans 150 residues: UPF0540 protein At1g62080 (150 aa).

An N-terminal signal peptide occupies residues 1 to 21 (MNATKFLVLLVIGVLCAIVTA). A compositionally biased stretch (low complexity) spans 119–135 (AAAARAKGKVASASRVK). Residues 119-150 (AAAARAKGKVASASRVKGSSEKKKKDRKGKKD) form a disordered region.

The protein belongs to the UPF0540 family.

The sequence is that of UPF0540 protein At1g62080 from Arabidopsis thaliana (Mouse-ear cress).